We begin with the raw amino-acid sequence, 225 residues long: Ribose-5-phosphate isomerase A (225 aa).

Residues 26 to 29 (TGST), 82 to 85 (DGAD), and 95 to 98 (KGGG) contribute to the substrate site. Catalysis depends on E104, which acts as the Proton acceptor. Residue K122 coordinates substrate.

It belongs to the ribose 5-phosphate isomerase family. Homodimer.

It catalyses the reaction aldehydo-D-ribose 5-phosphate = D-ribulose 5-phosphate. It participates in carbohydrate degradation; pentose phosphate pathway; D-ribose 5-phosphate from D-ribulose 5-phosphate (non-oxidative stage): step 1/1. Functionally, catalyzes the reversible conversion of ribose-5-phosphate to ribulose 5-phosphate. The polypeptide is Ribose-5-phosphate isomerase A (Streptococcus gordonii (strain Challis / ATCC 35105 / BCRC 15272 / CH1 / DL1 / V288)).